A 552-amino-acid polypeptide reads, in one-letter code: CTP synthase (552 aa).

The tract at residues 1-270 (MTKFVFVTGG…DGLICDKLRL (270 aa)) is amidoligase domain. Serine 13 contacts CTP. UTP is bound at residue serine 13. ATP contacts are provided by residues 14–19 (SLGKGI) and aspartate 71. Mg(2+) is bound by residues aspartate 71 and glutamate 144. CTP is bound by residues 151-153 (DIE), 191-196 (KTKPTQ), and lysine 227. Residues 191–196 (KTKPTQ) and lysine 227 each bind UTP. Residues 295-548 (QIAMVGKYVE…IKAAVEHQKP (254 aa)) enclose the Glutamine amidotransferase type-1 domain. Glycine 357 is a binding site for L-glutamine. Catalysis depends on cysteine 384, which acts as the Nucleophile; for glutamine hydrolysis. Residues 385-388 (LGMQ), glutamate 408, and arginine 474 each bind L-glutamine. Active-site residues include histidine 521 and glutamate 523.

Belongs to the CTP synthase family. In terms of assembly, homotetramer.

The catalysed reaction is UTP + L-glutamine + ATP + H2O = CTP + L-glutamate + ADP + phosphate + 2 H(+). It carries out the reaction L-glutamine + H2O = L-glutamate + NH4(+). It catalyses the reaction UTP + NH4(+) + ATP = CTP + ADP + phosphate + 2 H(+). It functions in the pathway pyrimidine metabolism; CTP biosynthesis via de novo pathway; CTP from UDP: step 2/2. Allosterically activated by GTP, when glutamine is the substrate; GTP has no effect on the reaction when ammonia is the substrate. The allosteric effector GTP functions by stabilizing the protein conformation that binds the tetrahedral intermediate(s) formed during glutamine hydrolysis. Inhibited by the product CTP, via allosteric rather than competitive inhibition. Its function is as follows. Catalyzes the ATP-dependent amination of UTP to CTP with either L-glutamine or ammonia as the source of nitrogen. Regulates intracellular CTP levels through interactions with the four ribonucleotide triphosphates. This chain is CTP synthase, found in Acidovorax ebreus (strain TPSY) (Diaphorobacter sp. (strain TPSY)).